Consider the following 239-residue polypeptide: Pyridoxine 5'-phosphate synthase (239 aa).

3-amino-2-oxopropyl phosphate is bound at residue Asn7. A 1-deoxy-D-xylulose 5-phosphate-binding site is contributed by 9–10 (DH). Arg18 serves as a coordination point for 3-amino-2-oxopropyl phosphate. Catalysis depends on His43, which acts as the Proton acceptor. 1-deoxy-D-xylulose 5-phosphate contacts are provided by Arg45 and His50. Glu70 functions as the Proton acceptor in the catalytic mechanism. A 1-deoxy-D-xylulose 5-phosphate-binding site is contributed by Thr100. Catalysis depends on His191, which acts as the Proton donor. 3-amino-2-oxopropyl phosphate contacts are provided by residues Gly192 and 213–214 (GH).

The protein belongs to the PNP synthase family. Homooctamer; tetramer of dimers.

It localises to the cytoplasm. The catalysed reaction is 3-amino-2-oxopropyl phosphate + 1-deoxy-D-xylulose 5-phosphate = pyridoxine 5'-phosphate + phosphate + 2 H2O + H(+). It functions in the pathway cofactor biosynthesis; pyridoxine 5'-phosphate biosynthesis; pyridoxine 5'-phosphate from D-erythrose 4-phosphate: step 5/5. Catalyzes the complicated ring closure reaction between the two acyclic compounds 1-deoxy-D-xylulose-5-phosphate (DXP) and 3-amino-2-oxopropyl phosphate (1-amino-acetone-3-phosphate or AAP) to form pyridoxine 5'-phosphate (PNP) and inorganic phosphate. The chain is Pyridoxine 5'-phosphate synthase from Geobacter metallireducens (strain ATCC 53774 / DSM 7210 / GS-15).